The chain runs to 236 residues: Small ribosomal subunit protein eS6 (236 aa).

S232 and S233 each carry phosphoserine.

The protein belongs to the eukaryotic ribosomal protein eS6 family. Phosphorylated.

In Eremothecium gossypii (strain ATCC 10895 / CBS 109.51 / FGSC 9923 / NRRL Y-1056) (Yeast), this protein is Small ribosomal subunit protein eS6 (RPS6).